Consider the following 500-residue polypeptide: Protein adenylyltransferase Fic (500 aa).

A helical membrane pass occupies residues 39–59 (LSFLIFFVIGSLFSGLMFALL). TPR repeat units lie at residues 122-155 (ALSS…SPRH) and 156-190 (PEIL…NPSH). An Inhibitory (S/T)XXXE(G/N) motif motif is present at residues 247–252 (SVGIEG). Residues glutamate 251 and 333 to 336 (VGGH) each bind ATP. Residues 302-437 (ITLKDLLEIH…IRPFVRFIAD (136 aa)) form the Fido domain. Histidine 380 is an active-site residue. Residues 384–391 (DGNGRTSR), 416–417 (YY), and asparagine 424 each bind ATP. Residues 477 to 500 (GREGGSTVHEGSGTGDSIRIGTMW) are disordered.

This sequence belongs to the fic family. As to quaternary structure, homodimer.

It is found in the membrane. It catalyses the reaction L-tyrosyl-[protein] + ATP = O-(5'-adenylyl)-L-tyrosyl-[protein] + diphosphate. The catalysed reaction is L-threonyl-[protein] + ATP = 3-O-(5'-adenylyl)-L-threonyl-[protein] + diphosphate. The enzyme catalyses 3-O-(5'-adenylyl)-L-threonyl-[protein] + H2O = L-threonyl-[protein] + AMP + H(+). Its activity is regulated as follows. The side chain of Glu-251 determines which of the two opposing activities (AMPylase or de-AMPylase) will take place. In response to endoplasmic reticulum stress, mediates de-AMPylase activity. Adenylyltransferase activity is inhibited by the inhibitory helix present at the N-terminus: Glu-251 binds ATP and competes with ATP-binding at Arg-391, thereby preventing adenylyltransferase activity. In unstressed cells, disengagement of Glu-251 promotes adenylyltransferase activity. Activation dissociates ATP-binding from Glu-251, allowing ordered binding of the entire ATP moiety with the alpha-phosphate in an orientation that is productive for accepting an incoming target hydroxyl side chain. Functionally, protein that can both mediate the addition of adenosine 5'-monophosphate (AMP) to specific residues of target proteins (AMPylation), and the removal of the same modification from target proteins (de-AMPylation), depending on the context. The side chain of Glu-251 determines which of the two opposing activities (AMPylase or de-AMPylase) will take place. Acts as a key regulator of the unfolded protein response (UPR) by mediating AMPylation or de-AMPylation of Hsc70-3/BiP. In unstressed cells, acts as an adenylyltransferase by mediating AMPylation of Hsc70-3/BiP at 'Thr-518', thereby inactivating it. In response to endoplasmic reticulum stress, acts as a phosphodiesterase by mediating removal of ATP (de-AMPylation) from Hsc70-3/BiP at 'Thr-518', leading to restore HSPA5/BiP activity. This is Protein adenylyltransferase Fic from Culex quinquefasciatus (Southern house mosquito).